Consider the following 764-residue polypeptide: 5-methyltetrahydropteroyltriglutamate--homocysteine methyltransferase (764 aa).

5-methyltetrahydropteroyltri-L-glutamate-binding positions include 16–19 (RELK) and K115. L-homocysteine is bound by residues 435-437 (IGS) and E488. L-methionine is bound by residues 435-437 (IGS) and E488. 5-methyltetrahydropteroyltri-L-glutamate is bound by residues 519-520 (RC) and W565. An L-homocysteine-binding site is contributed by D603. An L-methionine-binding site is contributed by D603. Residue E609 coordinates 5-methyltetrahydropteroyltri-L-glutamate. 3 residues coordinate Zn(2+): H645, C647, and E669. H698 serves as the catalytic Proton donor. Position 730 (C730) interacts with Zn(2+).

It belongs to the vitamin-B12 independent methionine synthase family. Requires Zn(2+) as cofactor.

The enzyme catalyses 5-methyltetrahydropteroyltri-L-glutamate + L-homocysteine = tetrahydropteroyltri-L-glutamate + L-methionine. It participates in amino-acid biosynthesis; L-methionine biosynthesis via de novo pathway; L-methionine from L-homocysteine (MetE route): step 1/1. Its function is as follows. Catalyzes the transfer of a methyl group from 5-methyltetrahydrofolate to homocysteine resulting in methionine formation. This chain is 5-methyltetrahydropteroyltriglutamate--homocysteine methyltransferase, found in Burkholderia pseudomallei (strain 1106a).